The primary structure comprises 193 residues: ATP-dependent protease subunit HslV (193 aa).

The active site involves Thr12. Na(+) contacts are provided by Ala167, Cys170, and Thr173.

This sequence belongs to the peptidase T1B family. HslV subfamily. A double ring-shaped homohexamer of HslV is capped on each side by a ring-shaped HslU homohexamer. The assembly of the HslU/HslV complex is dependent on binding of ATP.

It is found in the cytoplasm. The catalysed reaction is ATP-dependent cleavage of peptide bonds with broad specificity.. Allosterically activated by HslU binding. Its function is as follows. Protease subunit of a proteasome-like degradation complex believed to be a general protein degrading machinery. This chain is ATP-dependent protease subunit HslV, found in Bartonella quintana (strain Toulouse) (Rochalimaea quintana).